Here is a 284-residue protein sequence, read N- to C-terminus: 4-hydroxybenzoate octaprenyltransferase (284 aa).

9 consecutive transmembrane segments (helical) span residues 19 to 39, 42 to 62, 93 to 113, 114 to 134, 136 to 156, 158 to 178, 210 to 230, 233 to 253, and 264 to 284; these read IGSL…AQGL, LRVL…GCVI, LLLF…MNTL, TIQL…MKRF, HLPQ…AWAA, ANTL…WTIA, IIGL…QGLA, TSYY…QHLI, and AFLN…LSVW.

Belongs to the UbiA prenyltransferase family. Requires Mg(2+) as cofactor.

It is found in the cell inner membrane. It carries out the reaction all-trans-octaprenyl diphosphate + 4-hydroxybenzoate = 4-hydroxy-3-(all-trans-octaprenyl)benzoate + diphosphate. Its pathway is cofactor biosynthesis; ubiquinone biosynthesis. Functionally, catalyzes the prenylation of para-hydroxybenzoate (PHB) with an all-trans polyprenyl group. Mediates the second step in the final reaction sequence of ubiquinone-8 (UQ-8) biosynthesis, which is the condensation of the polyisoprenoid side chain with PHB, generating the first membrane-bound Q intermediate 3-octaprenyl-4-hydroxybenzoate. This is 4-hydroxybenzoate octaprenyltransferase from Vibrio cholerae serotype O1 (strain ATCC 39541 / Classical Ogawa 395 / O395).